Here is a 623-residue protein sequence, read N- to C-terminus: Chaperone protein HtpG (623 aa).

The tract at residues 1–341 (MEKREFKAES…SQDLSLNISR (341 aa)) is a; substrate-binding. Positions 342-549 (EMLQHDRQLS…EGEVSIEMEK (208 aa)) are b. Residues 550–623 (ILSAMPNNQG…FTNDICKLMK (74 aa)) form a c region.

The protein belongs to the heat shock protein 90 family. In terms of assembly, homodimer.

It localises to the cytoplasm. Its function is as follows. Molecular chaperone. Has ATPase activity. In Clostridium perfringens (strain 13 / Type A), this protein is Chaperone protein HtpG.